The primary structure comprises 437 residues: Ribosomal protein uS12 methylthiotransferase RimO (437 aa).

In terms of domain architecture, MTTase N-terminal spans 5–116; it reads PTIAISHLGC…IVEIVERVET (112 aa). Residues cysteine 14, cysteine 50, cysteine 79, cysteine 154, cysteine 158, and cysteine 161 each coordinate [4Fe-4S] cluster. A Radical SAM core domain is found at 140–369; sequence TTSEGVAYLR…MLTQQPISER (230 aa). The TRAM domain maps to 372–437; the sequence is QAYIGQTVDV…DTYDLYGEIV (66 aa).

The protein belongs to the methylthiotransferase family. RimO subfamily. [4Fe-4S] cluster serves as cofactor.

It localises to the cytoplasm. The enzyme catalyses L-aspartate(89)-[ribosomal protein uS12]-hydrogen + (sulfur carrier)-SH + AH2 + 2 S-adenosyl-L-methionine = 3-methylsulfanyl-L-aspartate(89)-[ribosomal protein uS12]-hydrogen + (sulfur carrier)-H + 5'-deoxyadenosine + L-methionine + A + S-adenosyl-L-homocysteine + 2 H(+). Functionally, catalyzes the methylthiolation of an aspartic acid residue of ribosomal protein uS12. The polypeptide is Ribosomal protein uS12 methylthiotransferase RimO (Microcystis aeruginosa (strain NIES-843 / IAM M-2473)).